We begin with the raw amino-acid sequence, 806 residues long: Leucine--tRNA ligase (806 aa).

Residues 38-48 (PYPSGEIHMGH) carry the 'HIGH' region motif. The 'KMSKS' region signature appears at 572–576 (KMSKS). K575 is an ATP binding site.

It belongs to the class-I aminoacyl-tRNA synthetase family.

The protein localises to the cytoplasm. The enzyme catalyses tRNA(Leu) + L-leucine + ATP = L-leucyl-tRNA(Leu) + AMP + diphosphate. In Helicobacter acinonychis (strain Sheeba), this protein is Leucine--tRNA ligase.